A 142-amino-acid polypeptide reads, in one-letter code: MTMPLQIYNTTRRELAESVLTEVVTTVLQEEGFLIESLVAVYCGNKMIHRINREFLGHDYPTDTITFSYSKGSEIDGEFYISLDAVEENALRYKVGFDEELMRVTIHSALHLAGYQDGKDEERVQMQEKEALYLKRFVTPST.

Zn(2+) contacts are provided by histidine 107, histidine 111, and aspartate 117.

Belongs to the endoribonuclease YbeY family. Zn(2+) serves as cofactor.

It is found in the cytoplasm. Single strand-specific metallo-endoribonuclease involved in late-stage 70S ribosome quality control and in maturation of the 3' terminus of the 16S rRNA. This is Endoribonuclease YbeY from Chlorobium phaeobacteroides (strain DSM 266 / SMG 266 / 2430).